The following is a 426-amino-acid chain: Endoglucanase Z (426 aa).

Positions 1-43 are cleaved as a signal peptide; the sequence is MPLSYLDKNPVIDSKKHALRKKLFLSCAYFGLSLACLSSNAWA. The tract at residues 44–332 is catalytic; the sequence is SVEPLSVNGN…VKSIIQSWPY (289 aa). Glu176 (proton donor) is an active-site residue. The active-site Nucleophile is Glu263. The tract at residues 333 to 366 is linker; sequence KAGSAASATTDPSTDTTTDTTVDEPTTTDTPATA. A disordered region spans residues 336–367; the sequence is SAASATTDPSTDTTTDTTVDEPTTTDTPATAD. The tract at residues 367-426 is cellulose-binding; the sequence is DCANANVYPNWVSKDWAGGQPTHNEAGQSIVYKGNLYTANWYTASVPGSDSSWTQVGSCN. Cys368 and Cys425 form a disulfide bridge.

This sequence belongs to the glycosyl hydrolase 5 (cellulase A) family.

It is found in the secreted. It catalyses the reaction Endohydrolysis of (1-&gt;4)-beta-D-glucosidic linkages in cellulose, lichenin and cereal beta-D-glucans.. Represents 97% of the global cellulase activity. The sequence is that of Endoglucanase Z (celZ) from Dickeya dadantii (strain 3937) (Erwinia chrysanthemi (strain 3937)).